The primary structure comprises 85 residues: Toxin BmKITc (85 aa).

The N-terminal stretch at Met-1–Ala-21 is a signal peptide. The LCN-type CS-alpha/beta domain occupies Asp-22–Gly-82. Cystine bridges form between Cys-31–Cys-81, Cys-35–Cys-56, Cys-42–Cys-63, and Cys-46–Cys-65.

It belongs to the long (4 C-C) scorpion toxin superfamily. Sodium channel inhibitor family. Beta subfamily. In terms of tissue distribution, expressed by the venom gland.

It is found in the secreted. In terms of biological role, depressant insect beta-toxins cause a transient contraction paralysis followed by a slow flaccid paralysis. They bind voltage-independently at site-4 of sodium channels (Nav) and shift the voltage of activation toward more negative potentials thereby affecting sodium channel activation and promoting spontaneous and repetitive firing. The polypeptide is Toxin BmKITc (Olivierus martensii (Manchurian scorpion)).